A 147-amino-acid polypeptide reads, in one-letter code: 3-dehydroquinate dehydratase (147 aa).

Tyr22 acts as the Proton acceptor in catalysis. Asn76, His82, and Asp89 together coordinate substrate. Residue His102 is the Proton donor of the active site. Residues 103–104 (IS) and Arg113 each bind substrate.

Belongs to the type-II 3-dehydroquinase family. In terms of assembly, homododecamer.

The enzyme catalyses 3-dehydroquinate = 3-dehydroshikimate + H2O. It participates in metabolic intermediate biosynthesis; chorismate biosynthesis; chorismate from D-erythrose 4-phosphate and phosphoenolpyruvate: step 3/7. Its function is as follows. Catalyzes a trans-dehydration via an enolate intermediate. The chain is 3-dehydroquinate dehydratase from Fusobacterium nucleatum subsp. nucleatum (strain ATCC 25586 / DSM 15643 / BCRC 10681 / CIP 101130 / JCM 8532 / KCTC 2640 / LMG 13131 / VPI 4355).